Consider the following 546-residue polypeptide: Protein FAM124A (546 aa).

3 disordered regions span residues M1–S37, F286–S360, and S488–I546. Residues S24–L36 are compositionally biased toward low complexity. Residues F286 to S302 are compositionally biased toward basic residues. 2 stretches are compositionally biased toward polar residues: residues P304–N324 and A347–S360. Residues S488 to P511 show a composition bias toward low complexity.

This sequence belongs to the FAM124 family.

The chain is Protein FAM124A (FAM124A) from Homo sapiens (Human).